Consider the following 1173-residue polypeptide: MFVLLVAYALLHIAGCQTTNGLNTSYSVCNGCVGYSENVFAVESGGYIPSDFAFNNWFLLTNTSSVVDGVVRSFQPLLLNCLWSVSGLRFTTGFVYFNGTGRGDCKGFSSDVLSDVIRYNLNFEENLRRGTILFKTSYGVVVFYCTNNTLVSGDAHIPFGTVLGNFYCFVNTTIGNETTSAFVGALPKTVREFVISRTGHFYINGYRYFTLGNVEAVNFNVTTAETTDFCTVALASYADVLVNVSQTSIANIIYCNSVINRLRCDQLSFDVPDGFYSTSPIQSVELPVSIVSLPVYHKHTFIVLYVDFKPQSGGGKCFNCYPAGVNITLANFNETKGPLCVDTSHFTTKYVAVYANVGRWSASINTGNCPFSFGKVNNFVKFGSVCFSLKDIPGGCAMPIVANWAYSKYYTIGSLYVSWSDGDGITGVPQPVEGVSSFMNVTLDKCTKYNIYDVSGVGVIRVSNDTFLNGITYTSTSGNLLGFKDVTKGTIYSITPCNPPDQLVVYQQAVVGAMLSENFTSYGFSNVVELPKFFYASNGTYNCTDAVLTYSSFGVCADGSIIAVQPRNVSYDSVSAIVTANLSIPSNWTTSVQVEYLQITSTPIVVDCSTYVCNGNVRCVELLKQYTSACKTIEDALRNSARLESADVSEMLTFDKKAFTLANVSSFGDYNLSSVIPSLPTSGSRVAGRSAIEDILFSKLVTSGLGTVDADYKKCTKGLSIADLACAQYYNGIMVLPGVADAERMAMYTGSLIGGIALGGLTSAVSIPFSLAIQARLNYVALQTDVLQENQKILAASFNKAMTNIVDAFTGVNDAITQTSQALQTVATALNKIQDVVNQQGNSLNHLTSQLRQNFQAISSSIQAIYDRLDTIQADQQVDRLITGRLAALNVFVSHTLTKYTEVRASRQLAQQKVNECVKSQSKRYGFCGNGTHIFSIVNAAPEGLVFLHTVLLPTQYKDVEAWSGLCVDGTNGYVLRQPNLALYKEGNYYRITSRIMFEPRIPTMADFVQIENCNVTFVNISRSELQTIVPEYIDVNKTLQELSYKLPNYTVPDLVVEQYNQTILNLTSEISTLENKSAELNYTVQKLQTLIDNINSTLVDLKWLNRVETYIKWPWWVWLCISVVLIFVVSMLLLCCCSTGCCGFFSCFASSIRGCCESTKLPYYDVEKIHIQ.

The signal sequence occupies residues 1–15 (MFVLLVAYALLHIAG). Residues 16-536 (CQTTNGLNTS…VVELPKFFYA (521 aa)) form an S1 region. Residues 16-1115 (CQTTNGLNTS…NRVETYIKWP (1100 aa)) are Virion surface-facing. Residues 417–547 (VSWSDGDGIT…NGTYNCTDAV (131 aa)) are interaction with ANPEP. The tract at residues 417 to 547 (VSWSDGDGIT…NGTYNCTDAV (131 aa)) is interaction with host ANPEP. Positions 537–1173 (SNGTYNCTDA…YYDVEKIHIQ (637 aa)) are S2. Positions 753 to 773 (IGGIALGGLTSAVSIPFSLAI) are fusion peptide. Residues 767–886 (IPFSLAIQAR…QVDRLITGRL (120 aa)) are heptad repeat 1 (HR1). Coiled coils occupy residues 834-878 (QDVV…DQQV) and 1063-1105 (TILN…LKWL). Residues 1031-1127 (PEYIDVNKTL…VWLCISVVLI (97 aa)) form a heptad repeat 2 (HR2) region. A helical membrane pass occupies residues 1116-1135 (WWVWLCISVVLIFVVSMLLL). Over 1136–1173 (CCCSTGCCGFFSCFASSIRGCCESTKLPYYDVEKIHIQ) the chain is Intravirion. A KxHxx motif is present at residues 1169 to 1173 (KIHIQ).

This sequence belongs to the alphacoronaviruses spike protein family. In terms of assembly, homotrimer. During virus morphogenesis, found in a complex with M and HE proteins. Interacts with host ANPEP.

Its subcellular location is the virion membrane. The protein localises to the host endoplasmic reticulum-Golgi intermediate compartment membrane. S1 region attaches the virion to the cell membrane by interacting with host ANPEP/aminopeptidase N, initiating the infection. Binding to the receptor probably induces conformational changes in the S glycoprotein unmasking the fusion peptide of S2 region and activating membranes fusion. S2 region belongs to the class I viral fusion protein. Under the current model, the protein has at least 3 conformational states: pre-fusion native state, pre-hairpin intermediate state, and post-fusion hairpin state. During viral and target cell membrane fusion, the coiled coil regions (heptad repeats) regions assume a trimer-of-hairpins structure, positioning the fusion peptide in close proximity to the C-terminal region of the ectodomain. The formation of this structure appears to drive apposition and subsequent fusion of viral and target cell membranes. The sequence is that of Spike glycoprotein from Human coronavirus 229E (HCoV-229E).